Consider the following 210-residue polypeptide: Holliday junction resolvase RecU (210 aa).

T93, D95, E108, and Q127 together coordinate Mg(2+).

Belongs to the RecU family. The cofactor is Mg(2+).

It localises to the cytoplasm. It catalyses the reaction Endonucleolytic cleavage at a junction such as a reciprocal single-stranded crossover between two homologous DNA duplexes (Holliday junction).. Endonuclease that resolves Holliday junction intermediates in genetic recombination. Cleaves mobile four-strand junctions by introducing symmetrical nicks in paired strands. Promotes annealing of linear ssDNA with homologous dsDNA. Required for DNA repair, homologous recombination and chromosome segregation. The polypeptide is Holliday junction resolvase RecU (Lactobacillus helveticus (strain DPC 4571)).